Consider the following 130-residue polypeptide: Albumin-1 C (130 aa).

Residues 1–26 form the signal peptide; sequence MASVKLASLIVLFATLGMFLTKNVGA. Disulfide bonds link Cys-29-Cys-46, Cys-33-Cys-48, and Cys-41-Cys-58. 2 propeptides span residues 64-69 and 123-130; these read VFLRTN and LLKSVSTA.

The C-terminal glycine may be removed from PA1b. Major component of both the cotyledons and embryonic axes of mature seeds.

PA1b binds to basic 7S globulin (BG) and stimulates its phosphorylation activity. Involved in the signal transduction system to regulate the growth and differentiation as a hormone peptide. Toxic to various insects through binding to a high affinity binding site in the insect gut. In Pisum sativum (Garden pea), this protein is Albumin-1 C.